The primary structure comprises 448 residues: Endoglucanase (448 aa).

Residues 1–34 (MFSKIKKINFFKKTFSFLIAVVMMLFTVLGTNTY) form the signal peptide. Substrate-binding positions include histidine 70, 74-75 (WY), tyrosine 101, and histidine 137. The active-site Proton donor is glutamate 175. Tyrosine 237 lines the substrate pocket. The active-site Nucleophile is the glutamate 263. Residues 269-270 (AS), tryptophan 297, and 302-304 (KSE) each bind substrate.

This sequence belongs to the glycosyl hydrolase 5 (cellulase A) family.

The catalysed reaction is Endohydrolysis of (1-&gt;4)-beta-D-glucosidic linkages in cellulose, lichenin and cereal beta-D-glucans.. The protein is Endoglucanase (eglA) of Clostridium saccharobutylicum.